The following is a 194-amino-acid chain: NADH-quinone oxidoreductase subunit B 1 (194 aa).

[4Fe-4S] cluster contacts are provided by cysteine 73, cysteine 74, cysteine 138, and cysteine 168.

Belongs to the complex I 20 kDa subunit family. In terms of assembly, NDH-1 is composed of 14 different subunits. Subunits NuoB, C, D, E, F, and G constitute the peripheral sector of the complex. [4Fe-4S] cluster is required as a cofactor.

The protein resides in the cell inner membrane. The catalysed reaction is a quinone + NADH + 5 H(+)(in) = a quinol + NAD(+) + 4 H(+)(out). Its function is as follows. NDH-1 shuttles electrons from NADH, via FMN and iron-sulfur (Fe-S) centers, to quinones in the respiratory chain. The immediate electron acceptor for the enzyme in this species is believed to be ubiquinone. Couples the redox reaction to proton translocation (for every two electrons transferred, four hydrogen ions are translocated across the cytoplasmic membrane), and thus conserves the redox energy in a proton gradient. The protein is NADH-quinone oxidoreductase subunit B 1 of Rhizobium etli (strain CIAT 652).